A 212-amino-acid chain; its full sequence is Urease accessory protein UreG (212 aa).

Position 19–26 (19–26 (GPVGSGKT)) interacts with GTP.

It belongs to the SIMIBI class G3E GTPase family. UreG subfamily. Homodimer. UreD, UreF and UreG form a complex that acts as a GTP-hydrolysis-dependent molecular chaperone, activating the urease apoprotein by helping to assemble the nickel containing metallocenter of UreC. The UreE protein probably delivers the nickel.

Its subcellular location is the cytoplasm. Its function is as follows. Facilitates the functional incorporation of the urease nickel metallocenter. This process requires GTP hydrolysis, probably effectuated by UreG. The chain is Urease accessory protein UreG from Vibrio parahaemolyticus.